The primary structure comprises 469 residues: MSTGKVVQVIGPVIDVEFPLDEELPTINNALKIKKADGTVLVSEVTLELGDGVVRTIAMDGTDGLQRGLDVEDTGDSIKVPVGKETLGRVFNVLGDTIDGGKELGPDIKRDPIHRDPPDYDELNPSTEVLETGIKVIDLLAPYIRGGKIGLFGGAGVGKTVLIQELIHNIAQEHNGISVFTGVGERTREGNDLYFEMKGSGVLERTAMVYGQMNEPPGARMRVALTGLTIAEHFRDVEGQDVLLFIDNIFRFTQAGSEVSALLGRIPSAVGYQPTLATEMGQLQERITSTKKGSVTSIQAVYVPADDYTDPAPATTFAHLDATTNLERALTQQGIYPAVDPLASTSTALDPQIVGEEHYEVATEVQHVLQRYKELQDIISILGMDELSDEEKTVVARARRIQLFLSQDFSVAAQFTGLPGHYVKIEDTISGFKGILDGKYDDLPEEAFRLVGSIDDVVEKAKKISATED.

Residue 153-160 coordinates ATP; it reads GGAGVGKT.

The protein belongs to the ATPase alpha/beta chains family. F-type ATPases have 2 components, CF(1) - the catalytic core - and CF(0) - the membrane proton channel. CF(1) has five subunits: alpha(3), beta(3), gamma(1), delta(1), epsilon(1). CF(0) has three main subunits: a(1), b(2) and c(9-12). The alpha and beta chains form an alternating ring which encloses part of the gamma chain. CF(1) is attached to CF(0) by a central stalk formed by the gamma and epsilon chains, while a peripheral stalk is formed by the delta and b chains.

It localises to the cell membrane. The catalysed reaction is ATP + H2O + 4 H(+)(in) = ADP + phosphate + 5 H(+)(out). In terms of biological role, produces ATP from ADP in the presence of a proton gradient across the membrane. The catalytic sites are hosted primarily by the beta subunits. The protein is ATP synthase subunit beta of Pediococcus pentosaceus (strain ATCC 25745 / CCUG 21536 / LMG 10740 / 183-1w).